A 340-amino-acid polypeptide reads, in one-letter code: GTPase Obg (340 aa).

The region spanning 1 to 159 (MRFIDKAKIH…RWIELELKLI (159 aa)) is the Obg domain. Residues 160–331 (ADIGIIGFPN…LIKLIAEVYE (172 aa)) form the OBG-type G domain. Residues 166-173 (GFPNAGKS), 191-195 (FTTLT), 213-216 (DIPG), 283-286 (NKID), and 312-314 (SLV) each bind GTP. Mg(2+) is bound by residues serine 173 and threonine 193.

Belongs to the TRAFAC class OBG-HflX-like GTPase superfamily. OBG GTPase family. As to quaternary structure, monomer. Mg(2+) is required as a cofactor.

The protein localises to the cytoplasm. Its function is as follows. An essential GTPase which binds GTP, GDP and possibly (p)ppGpp with moderate affinity, with high nucleotide exchange rates and a fairly low GTP hydrolysis rate. Plays a role in control of the cell cycle, stress response, ribosome biogenesis and in those bacteria that undergo differentiation, in morphogenesis control. In Persephonella marina (strain DSM 14350 / EX-H1), this protein is GTPase Obg.